The following is a 90-amino-acid chain: DNA-directed RNA polymerase subunit omega (90 aa).

This sequence belongs to the RNA polymerase subunit omega family. The RNAP catalytic core consists of 2 alpha, 1 beta, 1 beta' and 1 omega subunit. When a sigma factor is associated with the core the holoenzyme is formed, which can initiate transcription.

It carries out the reaction RNA(n) + a ribonucleoside 5'-triphosphate = RNA(n+1) + diphosphate. Functionally, promotes RNA polymerase assembly. Latches the N- and C-terminal regions of the beta' subunit thereby facilitating its interaction with the beta and alpha subunits. This is DNA-directed RNA polymerase subunit omega from Saccharophagus degradans (strain 2-40 / ATCC 43961 / DSM 17024).